The following is an 858-amino-acid chain: DNA replication licensing factor mcm4-A (858 aa).

The interval 1 to 125 (MSSPTSTPSR…ARKVKQVDLH (125 aa)) is disordered. Polar residues-rich tracts occupy residues 54–68 (SPSG…SSPA) and 79–94 (LDLS…SSRV). The segment at 301–326 (CQVCAFTTRVEIDRGRIAEPSVCKHC) adopts a C4-type zinc-finger fold. In terms of domain architecture, MCM spans 453-662 (IYERLAAALA…YDRRLAHHLV (210 aa)). Residues Y466, R492, K511, S512, N613, R638, R727, and E730 each coordinate ATP. An Arginine finger motif is present at residues 637–640 (SRFD).

Belongs to the MCM family. In terms of assembly, component of the mcm2-7 complex (RLF-M). The complex forms a toroidal hexameric ring with the proposed subunit order mcm2-mcm6-mcm4-mcm7-mcm3-mcm5. The heterodimer of mmcm3/mcm5 interacts with mcm4, mmcm6, mcm7 and weakly with mcm2. Component of the CMG helicase complex, composed of the mcm2-7 complex, the GINS complex and cdc45. Hyperphosphorylated during mitosis in a mechanism requiring cdc2-cyclin B and other kinases. Undergoes dephosphorylation after exiting mitosis, existing in a partially phosphorylated state in the cytosolic interphase mcm complex which associates with the pre-replication complexes (pre-Rcs). Complete dephosphorylation inactivates the mcm complex, preventing its binding to chromatin. Becomes actively phosphorylated during S phase once the mcm complex is assembled on the chromatin. This chromatin-associated phosphorylation occurs during the activation of the pre-Rcs and is independent of cdks. Phosphorylated by the cdc7-dbf4b complex.

It is found in the nucleus. The protein localises to the chromosome. It carries out the reaction ATP + H2O = ADP + phosphate + H(+). Acts as a component of the MCM2-7 complex (MCM complex) which is the replicative helicase essential for 'once per cell cycle' DNA replication initiation and elongation in eukaryotic cells. Core component of CDC45-MCM-GINS (CMG) helicase, the molecular machine that unwinds template DNA during replication, and around which the replisome is built. The active ATPase sites in the MCM2-7 ring are formed through the interaction surfaces of two neighboring subunits such that a critical structure of a conserved arginine finger motif is provided in trans relative to the ATP-binding site of the Walker A box of the adjacent subunit. The six ATPase active sites, however, are likely to contribute differentially to the complex helicase activity. This chain is DNA replication licensing factor mcm4-A (mcm4-a), found in Xenopus laevis (African clawed frog).